Reading from the N-terminus, the 393-residue chain is Major outer membrane porin, serovar L1 (393 aa).

An N-terminal signal peptide occupies residues Met1 to Ala22.

This sequence belongs to the chlamydial porin (CP) (TC 1.B.2) family. In terms of assembly, part of a disulfide cross-linked outer membrane complex (COMC) composed of the major outer membrane porin (MOMP), the small cysteine-rich protein (OmcA) and the large cysteine-rich periplasmic protein (OmcB).

The protein resides in the cell outer membrane. Its function is as follows. In elementary bodies (EBs, the infectious stage, which is able to survive outside the host cell) provides the structural integrity of the outer envelope through disulfide cross-links with the small cysteine-rich protein and the large cysteine-rich periplasmic protein. It has been described in publications as the Sarkosyl-insoluble COMC (Chlamydia outer membrane complex), and serves as the functional equivalent of peptidoglycan. Functionally, permits diffusion of specific solutes through the outer membrane. This chain is Major outer membrane porin, serovar L1 (ompA), found in Chlamydia trachomatis.